The following is a 334-amino-acid chain: Biotin synthase (334 aa).

A Radical SAM core domain is found at 55–285; that stretch reads GSSGSIHACS…VHPRKIIKIA (231 aa). Cys73, Cys77, and Cys80 together coordinate [4Fe-4S] cluster. Residues Cys152, Cys213, and Lys283 each contribute to the [2Fe-2S] cluster site.

This sequence belongs to the radical SAM superfamily. Biotin synthase family. In terms of assembly, homodimer. The cofactor is [4Fe-4S] cluster. [2Fe-2S] cluster serves as cofactor.

The catalysed reaction is (4R,5S)-dethiobiotin + (sulfur carrier)-SH + 2 reduced [2Fe-2S]-[ferredoxin] + 2 S-adenosyl-L-methionine = (sulfur carrier)-H + biotin + 2 5'-deoxyadenosine + 2 L-methionine + 2 oxidized [2Fe-2S]-[ferredoxin]. Its pathway is cofactor biosynthesis; biotin biosynthesis; biotin from 7,8-diaminononanoate: step 2/2. Its function is as follows. Catalyzes the conversion of dethiobiotin (DTB) to biotin by the insertion of a sulfur atom into dethiobiotin via a radical-based mechanism. This chain is Biotin synthase, found in Chlorobium phaeobacteroides (strain DSM 266 / SMG 266 / 2430).